We begin with the raw amino-acid sequence, 219 residues long: Ribosome maturation factor RimP (219 aa).

A disordered region spans residues 195 to 219; sequence EGRIPGDDLGAEPEDAASTETQEKK.

It belongs to the RimP family.

The protein resides in the cytoplasm. Required for maturation of 30S ribosomal subunits. The chain is Ribosome maturation factor RimP from Brucella melitensis biotype 2 (strain ATCC 23457).